Consider the following 328-residue polypeptide: Malate dehydrogenase (328 aa).

NAD(+) is bound at residue 11–17 (GAAGQIG). The substrate site is built by Arg94 and Arg100. NAD(+) contacts are provided by residues Asn107, Gln114, and 131–133 (VGN). Substrate contacts are provided by Asn133 and Arg164. His189 serves as the catalytic Proton acceptor.

It belongs to the LDH/MDH superfamily. MDH type 2 family.

It carries out the reaction (S)-malate + NAD(+) = oxaloacetate + NADH + H(+). Catalyzes the reversible oxidation of malate to oxaloacetate. The chain is Malate dehydrogenase from Xylella fastidiosa (strain M12).